The primary structure comprises 287 residues: Protein TMEPAI (287 aa).

Residues 1-40 (MHRLMGVNSTAAAAAGQPNVSCTCNCKRSLFQSMEITELE) are Lumenal-facing. The chain crosses the membrane as a helical span at residues 41 to 63 (FVQIIIIVVVMMVMVVVITCLLS). At 64–287 (HYKLSARSFI…EKDKQKGHPL (224 aa)) the chain is on the cytoplasmic side. Residues 158 to 161 (PPPY) carry the PPxY motif 1 motif. Residues 186–189 (PPNR) carry the SMAD interaction motif (SIM) motif. The PPxY motif 2 motif lies at 229 to 232 (PPTY). The interval 239–258 (YPGSSFQHQQSSGPPSLLEG) is disordered. Over residues 242-252 (SSFQHQQSSGP) the composition is skewed to polar residues.

The protein belongs to the PMEPA1 family. In terms of assembly, interacts with NEDD4 (via PPxY motifs). Interacts with AR. Interacts with LDLRAD4. Interacts (via the SMAD interaction motif) with SMAD2 and SMAD3. As to expression, highest expression in prostate. Also expressed in ovary.

The protein localises to the early endosome membrane. It is found in the golgi apparatus membrane. Its function is as follows. Functions as a negative regulator of TGF-beta signaling and thereby probably plays a role in cell proliferation, differentiation, apoptosis, motility, extracellular matrix production and immunosuppression. In the canonical TGF-beta pathway, ZFYVE9/SARA recruits the intracellular signal transducer and transcriptional modulators SMAD2 and SMAD3 to the TGF-beta receptor. Phosphorylated by the receptor, SMAD2 and SMAD3 then form a heteromeric complex with SMAD4 that translocates to the nucleus to regulate transcription. Through interaction with SMAD2 and SMAD3, LDLRAD4 may compete with ZFYVE9 and SMAD4 and prevent propagation of the intracellular signal. Also involved in down-regulation of the androgen receptor (AR), enhancing ubiquitination and proteasome-mediated degradation of AR, probably by recruiting NEDD4. This is Protein TMEPAI (PMEPA1) from Homo sapiens (Human).